We begin with the raw amino-acid sequence, 274 residues long: Large ribosomal subunit protein uL2cy (274 aa).

2 disordered regions span residues 1–20 (MAIH…AVDS) and 224–274 (NPVD…RRSK).

This sequence belongs to the universal ribosomal protein uL2 family. As to quaternary structure, part of the 50S ribosomal subunit.

It localises to the plastid. It is found in the chloroplast. The protein is Large ribosomal subunit protein uL2cy (rpl2-B) of Populus alba (White poplar).